Reading from the N-terminus, the 476-residue chain is Protein transport protein Sec61 subunit alpha isoform 2 (476 aa).

The Cytoplasmic portion of the chain corresponds to 1 to 33 (MGIKFLEVIKPFCAVLPEIQKPERKIQFREKVL). Residues 34-53 (WTAITLFIFLVCCQIPLFGI) traverse the membrane as a helical segment. Residues 54 to 76 (MSSDSADPFYWMRVILASNRGTL) are Lumenal-facing. The helical transmembrane segment at 77–96 (MELGISPIVTSGLIMQLLAG) threads the bilayer. Residues 97–117 (AKIIEVGDTPKDRALFNGAQK) are Cytoplasmic-facing. The helical transmembrane segment at 118–138 (LFGMIITIGQAIVYVMTGMYG) threads the bilayer. Over 139-144 (DPAEMG) the chain is Lumenal. The chain crosses the membrane as a helical span at residues 145-165 (AGICLLIIIQLFVAGLIVLLL). The Cytoplasmic portion of the chain corresponds to 166 to 172 (DELLQKG). Residues 173–193 (YGLGSGISLFIATNICETIVW) traverse the membrane as a helical segment. Topologically, residues 194–240 (KAFSPTTINTGRGTEFEGAVIALFHLLATRTDKVRALREAFYRQNLP) are lumenal. A helical transmembrane segment spans residues 241-261 (NLMNLIATVFVFAVVIYFQGF). Residues 262–288 (RVDLPIKSARYRGQYSSYPIKLFYTSN) lie on the Cytoplasmic side of the membrane. A helical membrane pass occupies residues 289-309 (IPIILQSALVSNLYVISQMLS). The Lumenal portion of the chain corresponds to 310 to 354 (VRFSGNFLVNLLGQWADVSGGGPARSYPVGGLCYYLSPPESMGAI). Residues 355–375 (FEDPVHVVVYIIFMLGSCAFF) form a helical membrane-spanning segment. The Cytoplasmic segment spans residues 376–420 (SKTWIEVSGSSAKDVAKQLKEQQMVMRGHRDTSMVHELNRYIPTA). A helical transmembrane segment spans residues 421–441 (AAFGGLCIGALSVLADFLGAI). The Lumenal segment spans residues 442-445 (GSGT). The helical transmembrane segment at 446–462 (GILLAVTIIYQYFEIFV) threads the bilayer. At 463-476 (KEQAEVGGMGALFF) the chain is on the cytoplasmic side.

The protein belongs to the SecY/SEC61-alpha family. In terms of assembly, the SEC61 channel-forming translocon complex consists of channel-forming core components SEC61A1, SEC61B and SEC61G and different auxiliary components such as SEC62 and SEC63.

It localises to the endoplasmic reticulum membrane. In terms of biological role, component of SEC61 channel-forming translocon complex that mediates transport of signal peptide-containing precursor polypeptides across the endoplasmic reticulum (ER). Forms a ribosome receptor and a gated pore in the ER membrane, both functions required for cotranslational translocation of nascent polypeptides. This is Protein transport protein Sec61 subunit alpha isoform 2 (SEC61A2) from Homo sapiens (Human).